We begin with the raw amino-acid sequence, 371 residues long: Monomethylxanthine methyltransferase 2 (371 aa).

S-adenosyl-L-homocysteine contacts are provided by Y18, C61, N66, D100, L101, S139, F140, and C156. Residues Y157, H160, and W161 each coordinate theobromine. Mg(2+) contacts are provided by N178, D260, F262, and N263. Y355 contacts theobromine.

It belongs to the methyltransferase superfamily. Type-7 methyltransferase family. It depends on Mg(2+) as a cofactor.

It catalyses the reaction 7-methylxanthine + S-adenosyl-L-methionine = theobromine + S-adenosyl-L-homocysteine + H(+). The protein operates within alkaloid biosynthesis. Involved in the biosynthesis of caffeine. Catalyzes the conversion of 7-methylxanthine (7mX) to theobromine and with a lower activity of paraxanthine to caffeine. This Coffea canephora (Robusta coffee) protein is Monomethylxanthine methyltransferase 2.